A 76-amino-acid polypeptide reads, in one-letter code: Alpha/kappa-conotoxin-like fe14.2 (76 aa).

A signal peptide spans 1-24 (MPSVRSVTCCCLLWMMLSVQLVTP). Positions 25–39 (GSPGTAQLSGQRTAR) are excised as a propeptide. 2 cysteine pairs are disulfide-bonded: Cys46–Cys61 and Cys50–Cys63. At Arg64 the chain carries Arginine amide. The propeptide occupies 65-76 (GKRDVVSSSMAV).

Belongs to the conotoxin J superfamily. In terms of tissue distribution, expressed by the venom duct.

The protein localises to the secreted. Highly inhibits both nicotinic acetylcholine receptors (neuronal (alpha-3/beta-4) and muscular (alpha-1/beta-1/epsilon/delta) subtypes) and the voltage-gated potassium channel Kv1.6/KCNA6 subtype. The sequence is that of Alpha/kappa-conotoxin-like fe14.2 from Conus ferrugineus (Cone snail).